The sequence spans 1182 residues: Receptor-type guanylate cyclase gcy-19 (1182 aa).

Residues 1–24 (MEYLLFLLLFAGFLTFLPRFLIYA) form the signal peptide. The Extracellular segment spans residues 25-507 (QITSSTTTTT…PQSFVDQYGA (483 aa)). Asparagine 91, asparagine 369, asparagine 430, and asparagine 453 each carry an N-linked (GlcNAc...) asparagine glycan. Residues 508-528 (LVFAIGGVLIFAMLFVITCFF) traverse the membrane as a helical segment. At 529–1182 (YVMRQKRLER…FRRQETLALI (654 aa)) the chain is on the cytoplasmic side. One can recognise a Protein kinase domain in the interval 562 to 849 (RMSKRSLQSG…KGNLMDHVFN (288 aa)). The Guanylate cyclase domain maps to 907 to 1037 (TVFFSDVVKF…DTVNTASRME (131 aa)). Positions 1094–1164 (VSSNSGYQSD…EAKARDIHNE (71 aa)) are disordered. Residues 1142 to 1152 (SPTLSKRSVSP) show a composition bias toward low complexity.

Belongs to the adenylyl cyclase class-4/guanylyl cyclase family. As to expression, expressed in IL2 sensory neurons.

The protein localises to the cell membrane. It catalyses the reaction GTP = 3',5'-cyclic GMP + diphosphate. Its function is as follows. Guanylate cyclase involved in the production of the second messenger cGMP. This is Receptor-type guanylate cyclase gcy-19 from Caenorhabditis elegans.